Reading from the N-terminus, the 450-residue chain is Glucose-6-phosphate isomerase (450 aa).

The residue at position 38 (threonine 38) is a Phosphothreonine. The active-site Proton donor is the glutamate 290. Residues histidine 311 and lysine 425 contribute to the active site.

The protein belongs to the GPI family.

It localises to the cytoplasm. The enzyme catalyses alpha-D-glucose 6-phosphate = beta-D-fructose 6-phosphate. The protein operates within carbohydrate biosynthesis; gluconeogenesis. It participates in carbohydrate degradation; glycolysis; D-glyceraldehyde 3-phosphate and glycerone phosphate from D-glucose: step 2/4. Catalyzes the reversible isomerization of glucose-6-phosphate to fructose-6-phosphate. This Bacillus subtilis (strain 168) protein is Glucose-6-phosphate isomerase.